The primary structure comprises 172 residues: Adenine phosphoribosyltransferase (172 aa).

Belongs to the purine/pyrimidine phosphoribosyltransferase family. In terms of assembly, homodimer.

It is found in the cytoplasm. The catalysed reaction is AMP + diphosphate = 5-phospho-alpha-D-ribose 1-diphosphate + adenine. It functions in the pathway purine metabolism; AMP biosynthesis via salvage pathway; AMP from adenine: step 1/1. In terms of biological role, catalyzes a salvage reaction resulting in the formation of AMP, that is energically less costly than de novo synthesis. The sequence is that of Adenine phosphoribosyltransferase from Prochlorococcus marinus (strain MIT 9215).